Reading from the N-terminus, the 321-residue chain is Aspartate carbamoyltransferase catalytic subunit (321 aa).

The carbamoyl phosphate site is built by Arg-70 and Thr-71. Lys-98 contacts L-aspartate. Carbamoyl phosphate is bound by residues Arg-120, His-148, and Gln-151. L-aspartate-binding residues include Arg-181 and Arg-235. Gly-276 and Pro-277 together coordinate carbamoyl phosphate.

The protein belongs to the aspartate/ornithine carbamoyltransferase superfamily. ATCase family. In terms of assembly, heterododecamer (2C3:3R2) of six catalytic PyrB chains organized as two trimers (C3), and six regulatory PyrI chains organized as three dimers (R2).

It carries out the reaction carbamoyl phosphate + L-aspartate = N-carbamoyl-L-aspartate + phosphate + H(+). It functions in the pathway pyrimidine metabolism; UMP biosynthesis via de novo pathway; (S)-dihydroorotate from bicarbonate: step 2/3. Catalyzes the condensation of carbamoyl phosphate and aspartate to form carbamoyl aspartate and inorganic phosphate, the committed step in the de novo pyrimidine nucleotide biosynthesis pathway. The polypeptide is Aspartate carbamoyltransferase catalytic subunit (Gluconacetobacter diazotrophicus (strain ATCC 49037 / DSM 5601 / CCUG 37298 / CIP 103539 / LMG 7603 / PAl5)).